The primary structure comprises 184 residues: Ras-related protein Rap-1A (184 aa).

GTP-binding positions include 10-18 (GSGGVGKSA), 29-35 (VEKYDPT), glycine 60, and 116-119 (NKCD). Positions 32–40 (YDPTIEDSY) match the Effector region motif. Cysteine 181 carries the cysteine methyl ester modification. The S-geranylgeranyl cysteine moiety is linked to residue cysteine 181. The propeptide at 182-184 (LLL) is removed in mature form.

This sequence belongs to the small GTPase superfamily. Ras family. As to quaternary structure, found in a complex, at least composed of ITGB1BP1, KRIT1 and RAP1A. Interacts (active GTP-bound form preferentially) with KRIT1 (via C-terminus FERM domain); the interaction does not induce the opening conformation of KRIT1. Found in a complex composed of CDH1, RAP1A and PKP3; PKP3 acts as a scaffold protein within the complex, the complex is required for CDH1 localization to mature desmosome cell junctions. In its GTP-bound form interacts with PLCE1 and RADIL. Interacts with SGSM1, SGSM2 and SGSM3. Interacts (via GTP-bound active form) with RAPGEF2 (via Ras-associating domain). Interacts with TBC1D21. Interacts with RAP1GDS1.

It is found in the cell membrane. The protein resides in the cytoplasm. The protein localises to the perinuclear region. It localises to the cell junction. Its subcellular location is the early endosome. It catalyses the reaction GTP + H2O = GDP + phosphate + H(+). Activated by guanine nucleotide-exchange factors (GEF) EPAC and EPAC2 in a cAMP-dependent manner, and GFR. Its function is as follows. Counteracts the mitogenic function of Ras, at least partly because it can interact with Ras GAPs and RAF in a competitive manner. Together with ITGB1BP1, regulates KRIT1 localization to microtubules and membranes. Plays a role in nerve growth factor (NGF)-induced neurite outgrowth. Plays a role in the regulation of embryonic blood vessel formation. Involved in the establishment of basal endothelial barrier function. Facilitates the progressive accumulation of CDH1 at mature desmosome junctions via cAMP-dependent signaling and its interaction with PKP3. May be involved in the regulation of the vascular endothelial growth factor receptor KDR expression at endothelial cell-cell junctions. This Bos taurus (Bovine) protein is Ras-related protein Rap-1A (RAP1A).